The following is a 207-amino-acid chain: Ribosomal RNA small subunit methyltransferase G (207 aa).

S-adenosyl-L-methionine is bound by residues Gly77, Phe82, 100 to 102 (ERS), and Arg141.

Belongs to the methyltransferase superfamily. RNA methyltransferase RsmG family.

It is found in the cytoplasm. Specifically methylates the N7 position of a guanine in 16S rRNA. This chain is Ribosomal RNA small subunit methyltransferase G, found in Borrelia hermsii (strain HS1 / DAH).